Reading from the N-terminus, the 425-residue chain is MYDAIVVGGGFSGLKAARDLTNAGKKVLLLEGGERLGGRAYSRESRNVPGLRVEIGGAYLHRKHHPRLAAELDRYGIPTAAASEFTSFRHRLGPTAVDQAFPIPGSEAVAVEAATYTLLRDAHRIDLEKGLENQDLEDLDIPLNEYVDKLDLPPVSRQFLLAWAWNMLGQPADQASALWMLQLVAAHHYSILGVVLSLDEVFSNGSADLVDAMSQEIPEIRLQTVVTGIDQSGDVVNVTVKDGHAFQAHSVIVATPMNTWRRIVFTPALPERRRSVIEEGHGGQGLKILIHVRGAEAGIECVGDGIFPTLYDYCEVSESERLLVAFTDSGSFDPTDIGAVKDAVLYYLPEVEVLGIDYHDWIADPLFEGPWVAPRVGQFSRVHKELGEPAGRIHFVGSDVSLEFPGYIEGALETAECAVNAILHS.

Residues S12, E31, 38 to 39, and 56 to 59 each bind FAD; these read GR and GGAY. A (S)-6-hydroxynicotine-binding site is contributed by N166. An FAD-binding site is contributed by V226. (S)-6-hydroxynicotine contacts are provided by Y311, F326, and W371. FAD-binding positions include S398 and 406 to 408; that span reads GYI. A (S)-6-hydroxynicotine-binding site is contributed by Y407.

This sequence belongs to the flavin monoamine oxidase family. In terms of assembly, homodimer. The cofactor is FAD.

It localises to the cytoplasm. It carries out the reaction (S)-6-hydroxynicotine + O2 + H2O = 6-hydroxypseudooxynicotine + H2O2. The enzyme catalyses (S)-6-hydroxynicotine + O2 = 6-hydroxy-N-methylmyosmine + H2O2. The protein operates within alkaloid degradation; nicotine degradation; 6-hydroxypseudooxynicotine from nicotine (S-isomer route): step 2/2. Inhibited by (R)-6-hydroxynicotine. Inhibited by high concentrations of phenanthroline. Activity is strongly affected by Hg(2+) and p-chloromercuriphenylsulfonate, but not by N-ethylmaleimide and 5,5'-dithiobis-(2-nitrobenzoate). Its function is as follows. Involved in the degradation of L-nicotine. Catalyzes the oxidation of (S)-6-hydroxynicotine (6-hydroxy-L-nicotine) to 6-hydroxypseudooxynicotine. Oxidation of the pyrrolidine ring of (S)-6-hydroxynicotine leads to the formation of the optically inactive 6-hydroxy-N-methylmyosmine, which hydrolyzes spontaneously to 6-hydroxypseudooxynicotine. Acts with absolute stereospecificity on the L-form of 6-hydroxynicotine. Can also use (S)-6-hydroxynornicotine. In Paenarthrobacter nicotinovorans (Arthrobacter nicotinovorans), this protein is (S)-6-hydroxynicotine oxidase.